Reading from the N-terminus, the 293-residue chain is Pantothenate synthetase (293 aa).

Residue 30–37 (MGNLHEGH) coordinates ATP. The active-site Proton donor is His-37. Residue Gln-61 participates in (R)-pantoate binding. Beta-alanine is bound at residue Gln-61. 149-152 (GEKD) contacts ATP. Position 155 (Gln-155) interacts with (R)-pantoate. ATP contacts are provided by residues Val-178 and 186-189 (MSSR).

It belongs to the pantothenate synthetase family. As to quaternary structure, homodimer.

The protein resides in the cytoplasm. It carries out the reaction (R)-pantoate + beta-alanine + ATP = (R)-pantothenate + AMP + diphosphate + H(+). The protein operates within cofactor biosynthesis; (R)-pantothenate biosynthesis; (R)-pantothenate from (R)-pantoate and beta-alanine: step 1/1. Catalyzes the condensation of pantoate with beta-alanine in an ATP-dependent reaction via a pantoyl-adenylate intermediate. This Vibrio cholerae serotype O1 (strain ATCC 39541 / Classical Ogawa 395 / O395) protein is Pantothenate synthetase.